The chain runs to 443 residues: SAM50-like protein CG7639 (443 aa).

In terms of domain architecture, POTRA spans 23 to 101 (ARVDRVNVSG…QGYEVTFKGN (79 aa)).

Belongs to the SAM50/omp85 family. In terms of assembly, associates with the mitochondrial contact site and cristae organizing system (MICOS) complex (also known as MINOS or MitOS complex).

It localises to the mitochondrion outer membrane. May play a role in the maintenance of the structure of mitochondrial cristae. The chain is SAM50-like protein CG7639 from Drosophila melanogaster (Fruit fly).